The following is a 148-amino-acid chain: Large ribosomal subunit protein bL9 (148 aa).

The protein belongs to the bacterial ribosomal protein bL9 family.

Its function is as follows. Binds to the 23S rRNA. The polypeptide is Large ribosomal subunit protein bL9 (Solibacter usitatus (strain Ellin6076)).